Reading from the N-terminus, the 543-residue chain is Secreted effector protein SptP (543 aa).

A chaperone-binding region spans residues 35–139 (TDKAYVAPEK…FINLIKNKDN (105 aa)). In terms of domain architecture, Bacterial Rho-GAP spans 162 to 293 (DVGAESKQPL…TAELEKIKAG (132 aa)). In terms of domain architecture, Tyrosine-protein phosphatase spans 315 to 543 (IPINQQTQVK…QAQLLMTTAS (229 aa)). Cys481 acts as the Phosphocysteine intermediate in catalysis.

As to quaternary structure, forms a complex with SicP.

The protein resides in the secreted. Its subcellular location is the host cytoplasm. The enzyme catalyses O-phospho-L-tyrosyl-[protein] + H2O = L-tyrosyl-[protein] + phosphate. Its function is as follows. Effector proteins function to alter host cell physiology and promote bacterial survival in host tissues. This protein includes tyrosine phosphatase and GTPase activating protein (GAP) activities. After bacterial internalization, GAP mediates the reversal of the cytoskeletal changes induced by SopE. This function is independent of its tyrosine phosphatase activity, which remains unclear. This Salmonella typhi protein is Secreted effector protein SptP (sptP).